Consider the following 379-residue polypeptide: Forkhead box protein F1 (379 aa).

The tract at residues 1–45 is disordered; that stretch reads MSSAPEKQQPPHGGGGGGGGGGGAAMDPASSGPSKAKKTNAGIRR. The span at 12–24 shows a compositional bias: gly residues; that stretch reads HGGGGGGGGGGGA. A DNA-binding region (fork-head) is located at residues 47 to 138; the sequence is EKPPYSYIAL…EFMFEEGSFR (92 aa).

In terms of tissue distribution, expressed in lung and placenta.

Its subcellular location is the nucleus. Functionally, probable transcription activator for a number of lung-specific genes. This Homo sapiens (Human) protein is Forkhead box protein F1 (FOXF1).